A 208-amino-acid chain; its full sequence is Component of Sp100-rs (208 aa).

The HSR domain maps to 6–121 (GSPRMSTEQE…LRRSFECGAK (116 aa)).

This chain is Component of Sp100-rs (Csprs), found in Mus musculus (Mouse).